Consider the following 2217-residue polypeptide: Protein irg-7 (2217 aa).

Positions 1–16 (MRNWVLIAALAVICLA) are cleaved as a signal peptide. EGF-like domains lie at 370–405 (SGST…FHCQ) and 864–896 (TGTY…ESCE). 8 disulfides stabilise this stretch: C379–C393, C395–C404, C868–C873, C886–C895, C1212–C1312, C1285–C1304, C1508–C1521, and C1523–C1532. The C-type lectin domain occupies 1188 to 1313 (IGQYCIKFMA…CAEPRAFACQ (126 aa)). In terms of domain architecture, EGF-like 3 spans 1499–1533 (TGSRCTVPICVNGGTRNPDEATCSCPDGYEGPNCQ). The VWFA domain occupies 2016-2202 (DVVFMIDGSQ…NNQIKTIQQL (187 aa)).

It is found in the secreted. Functionally, plays a role in innate immunity, probably via the atf-7 pathway, to confer resistance to pathogenic bacteria. May also play a role in the regulation of longevity. The protein is Protein irg-7 of Caenorhabditis elegans.